The primary structure comprises 220 residues: Transcriptional regulatory protein LnrK (220 aa).

The Response regulatory domain occupies 3-119; the sequence is KIIITDDQDI…TIVKAVMTVH (117 aa). The residue at position 54 (D54) is a 4-aspartylphosphate. In terms of domain architecture, HTH luxR-type spans 151–216; it reads KPNELLDLTE…QAAIYSVRYG (66 aa). Positions 175-194 form a DNA-binding region, H-T-H motif; that stretch reads NKEIAEKLYITEGTVKNHVS.

In terms of processing, phosphorylated by LnrJ.

Its subcellular location is the cytoplasm. In terms of biological role, required for resistance to linearmycins, a family of antibiotic-specialized metabolites produced by some streptomycetes. Member of the two-component regulatory system LnrJ/LnrK, which induces expression of the LnrLMN ABC transporter in response to linearmycins and other polyenes. Probably binds to the promoter region of the lnrLMN operon and directly regulates its expression. May also promote biofilm formation. The chain is Transcriptional regulatory protein LnrK from Bacillus subtilis (strain 168).